The chain runs to 397 residues: DNA-directed RNA polymerase subunit Rpo1C (397 aa).

It belongs to the RNA polymerase beta' chain family. As to quaternary structure, part of the RNA polymerase complex. An artificial construct of the RNAP clamp domain (including part of this protein) contacts transcription elongation factors Spt4 and Spt5.

The protein localises to the cytoplasm. The catalysed reaction is RNA(n) + a ribonucleoside 5'-triphosphate = RNA(n+1) + diphosphate. In terms of biological role, DNA-dependent RNA polymerase (RNAP) catalyzes the transcription of DNA into RNA using the four ribonucleoside triphosphates as substrates. Forms part of the jaw domain. In Pyrococcus furiosus (strain ATCC 43587 / DSM 3638 / JCM 8422 / Vc1), this protein is DNA-directed RNA polymerase subunit Rpo1C.